A 1422-amino-acid polypeptide reads, in one-letter code: FH1/FH2 domain-containing protein 3 (1422 aa).

The GBD/FH3 domain occupies asparagine 18–serine 411. Disordered regions lie at residues arginine 323–glutamine 464, alanine 521–glycine 666, arginine 687–glutamate 708, serine 754–lysine 781, leucine 821–leucine 849, glutamine 1262–glutamate 1305, serine 1320–valine 1357, and threonine 1374–arginine 1410. Serine 345 carries the post-translational modification Phosphoserine. The span at leucine 357 to serine 366 shows a compositional bias: basic residues. Residues valine 367 to proline 390 are compositionally biased toward polar residues. Phosphoserine is present on serine 375. Over residues serine 410 to proline 430 the composition is skewed to low complexity. Over residues serine 438–arginine 449 the composition is skewed to polar residues. The stretch at phenylalanine 448 to lysine 480 forms a coiled coil. The segment covering glutamine 450–glutamine 464 has biased composition (basic and acidic residues). Low complexity predominate over residues alanine 521–serine 535. Residues glutamine 536–glycine 547 show a composition bias toward polar residues. Composition is skewed to acidic residues over residues proline 559–alanine 569 and glutamate 592–proline 603. Over residues glutamate 604 to asparagine 624 the composition is skewed to basic and acidic residues. Residues serine 626–serine 635 show a composition bias toward low complexity. The span at leucine 637 to threonine 651 shows a compositional bias: basic and acidic residues. Position 763 is a phosphoserine (serine 763). Position 775 is a phosphothreonine (threonine 775). Over residues proline 827–leucine 849 the composition is skewed to pro residues. An FH1 domain is found at proline 827–proline 858. Residues glycine 883 to lysine 1279 form the FH2 domain. The segment covering lysine 1264–glycine 1278 has biased composition (basic residues). Positions aspartate 1359–alanine 1391 constitute a DAD domain. Residues glutamate 1385–leucine 1400 are compositionally biased toward basic residues.

This sequence belongs to the formin homology family. Interacts with nestin/NES-based interfilament (IF). Interacts with SQSTM1; isoform 4 threonine phosphorylation disrupts SQSTM1-binding. In terms of processing, phosphorylated on Thr-1474 and Thr-1476 by CK2. Expressed in the heart, kidney and brain. May be down-regulated in various types of heart diseases, including idiopathic dilated, ventricular dilated, familial dilated and perinatal dilated cardiomyopathies, as well as ischemic heart disease (at protein level).

It is found in the cytoplasm. Its subcellular location is the cytoskeleton. It localises to the myofibril. The protein localises to the sarcomere. The protein resides in the z line. Functionally, actin-organizing protein that may cause stress fiber formation together with cell elongation. Isoform 4 may play a role in actin filament polymerization in cardiomyocytes. This Homo sapiens (Human) protein is FH1/FH2 domain-containing protein 3 (FHOD3).